Here is a 223-residue protein sequence, read N- to C-terminus: DNA mismatch repair protein MutH (223 aa).

Belongs to the MutH family.

The protein resides in the cytoplasm. In terms of biological role, sequence-specific endonuclease that cleaves unmethylated GATC sequences. It is involved in DNA mismatch repair. This Haemophilus influenzae (strain PittGG) protein is DNA mismatch repair protein MutH.